The sequence spans 68 residues: Large ribosomal subunit protein bL31 (68 aa).

C17, C19, C37, and C40 together coordinate Zn(2+).

The protein belongs to the bacterial ribosomal protein bL31 family. Type A subfamily. As to quaternary structure, part of the 50S ribosomal subunit. Zn(2+) serves as cofactor.

Binds the 23S rRNA. The protein is Large ribosomal subunit protein bL31 of Dehalococcoides mccartyi (strain CBDB1).